The chain runs to 650 residues: Chaperone protein DnaK (650 aa).

Thr-200 carries the post-translational modification Phosphothreonine; by autocatalysis.

Belongs to the heat shock protein 70 family.

Acts as a chaperone. In Burkholderia orbicola (strain MC0-3), this protein is Chaperone protein DnaK.